The following is a 220-amino-acid chain: MNINKYIDHTLLKADSVQSQLDQLIEEAKAYDFASVCVNPCWVAYAAKALKGTDVKVCTVVGFPLGATTSATKAFETKDAIENGADEIDMVINIGLLKQGDYQAVEDDMRAVVEASGDKLVKVIIEACLLTDDEKVKACQLAVNAGVDFVKTSTGFSTGGATVSDVKLMRQTVGPDIGVKAAGGARSLEDALAFVEAGATRIGTSAGVTIMKGEVANGGY.

The active-site Proton donor/acceptor is the D89. K151 acts as the Schiff-base intermediate with acetaldehyde in catalysis. Residue K180 is the Proton donor/acceptor of the active site.

The protein belongs to the DeoC/FbaB aldolase family. DeoC type 1 subfamily.

The protein resides in the cytoplasm. It catalyses the reaction 2-deoxy-D-ribose 5-phosphate = D-glyceraldehyde 3-phosphate + acetaldehyde. Its pathway is carbohydrate degradation; 2-deoxy-D-ribose 1-phosphate degradation; D-glyceraldehyde 3-phosphate and acetaldehyde from 2-deoxy-alpha-D-ribose 1-phosphate: step 2/2. Catalyzes a reversible aldol reaction between acetaldehyde and D-glyceraldehyde 3-phosphate to generate 2-deoxy-D-ribose 5-phosphate. The chain is Deoxyribose-phosphate aldolase from Streptococcus equi subsp. equi (strain 4047).